We begin with the raw amino-acid sequence, 270 residues long: Formamidopyrimidine-DNA glycosylase (270 aa).

The active-site Schiff-base intermediate with DNA is the Pro2. Glu3 acts as the Proton donor in catalysis. The Proton donor; for beta-elimination activity role is filled by Lys58. The DNA site is built by His91, Arg110, and Arg151. Residues 236-270 (RVYDREDAPCRRCATPIRRIVQAQRASFYCPTCQR) form an FPG-type zinc finger. Arg260 functions as the Proton donor; for delta-elimination activity in the catalytic mechanism.

The protein belongs to the FPG family. In terms of assembly, monomer. Zn(2+) is required as a cofactor.

The enzyme catalyses Hydrolysis of DNA containing ring-opened 7-methylguanine residues, releasing 2,6-diamino-4-hydroxy-5-(N-methyl)formamidopyrimidine.. The catalysed reaction is 2'-deoxyribonucleotide-(2'-deoxyribose 5'-phosphate)-2'-deoxyribonucleotide-DNA = a 3'-end 2'-deoxyribonucleotide-(2,3-dehydro-2,3-deoxyribose 5'-phosphate)-DNA + a 5'-end 5'-phospho-2'-deoxyribonucleoside-DNA + H(+). Involved in base excision repair of DNA damaged by oxidation or by mutagenic agents. Acts as a DNA glycosylase that recognizes and removes damaged bases. Has a preference for oxidized purines, such as 7,8-dihydro-8-oxoguanine (8-oxoG). Has AP (apurinic/apyrimidinic) lyase activity and introduces nicks in the DNA strand. Cleaves the DNA backbone by beta-delta elimination to generate a single-strand break at the site of the removed base with both 3'- and 5'-phosphates. This is Formamidopyrimidine-DNA glycosylase from Thiobacillus denitrificans (strain ATCC 25259 / T1).